Here is a 438-residue protein sequence, read N- to C-terminus: Xylose isomerase (438 aa).

Residues His100 and Asp103 contribute to the active site. Mg(2+) is bound by residues Glu231, Glu267, His270, Asp295, Asp306, Asp308, and Asp338.

Belongs to the xylose isomerase family. As to quaternary structure, homotetramer. The cofactor is Mg(2+).

The protein localises to the cytoplasm. It catalyses the reaction alpha-D-xylose = alpha-D-xylulofuranose. The protein is Xylose isomerase of Pseudomonas fluorescens (strain Pf0-1).